The chain runs to 20 residues: Non-specific lipid-transfer protein-like protein (20 aa).

This sequence belongs to the plant LTP family.

In Jatropha curcas (Barbados nut), this protein is Non-specific lipid-transfer protein-like protein.